The sequence spans 282 residues: ATP synthase gamma chain (282 aa).

It belongs to the ATPase gamma chain family. F-type ATPases have 2 components, CF(1) - the catalytic core - and CF(0) - the membrane proton channel. CF(1) has five subunits: alpha(3), beta(3), gamma(1), delta(1), epsilon(1). CF(0) has three main subunits: a, b and c.

It is found in the cell membrane. Produces ATP from ADP in the presence of a proton gradient across the membrane. The gamma chain is believed to be important in regulating ATPase activity and the flow of protons through the CF(0) complex. The chain is ATP synthase gamma chain from Clostridium botulinum (strain 657 / Type Ba4).